A 249-amino-acid polypeptide reads, in one-letter code: ATP synthase subunit a (249 aa).

6 consecutive transmembrane segments (helical) span residues 30–50, 84–104, 114–134, 143–163, 193–213, and 220–240; these read SLYMLLAVGAVALLMLGGSAG, FFPLVFSIFMFVLMANLIGVI, LIVTVALALIVFLTVLLYGLY, VFVPSGVPIYILPLIAMIEVI, FVTSLGALGVAGIAGAALPLA, and ILEVLVALLQAYVFAILTCIY.

Belongs to the ATPase A chain family. F-type ATPases have 2 components, CF(1) - the catalytic core - and CF(0) - the membrane proton channel. CF(1) has five subunits: alpha(3), beta(3), gamma(1), delta(1), epsilon(1). CF(0) has three main subunits: a(1), b(2) and c(9-12). The alpha and beta chains form an alternating ring which encloses part of the gamma chain. CF(1) is attached to CF(0) by a central stalk formed by the gamma and epsilon chains, while a peripheral stalk is formed by the delta and b chains.

The protein resides in the cell inner membrane. Key component of the proton channel; it plays a direct role in the translocation of protons across the membrane. This is ATP synthase subunit a from Afipia carboxidovorans (strain ATCC 49405 / DSM 1227 / KCTC 32145 / OM5) (Oligotropha carboxidovorans).